Consider the following 141-residue polypeptide: Galactose-6-phosphate isomerase subunit LacA (141 aa).

Belongs to the LacAB/RpiB family. As to quaternary structure, heteromultimeric protein consisting of LacA and LacB.

The catalysed reaction is aldehydo-D-galactose 6-phosphate = keto-D-tagatose 6-phosphate. Its pathway is carbohydrate metabolism; D-galactose 6-phosphate degradation; D-tagatose 6-phosphate from D-galactose 6-phosphate: step 1/1. The chain is Galactose-6-phosphate isomerase subunit LacA from Streptococcus pneumoniae serotype 2 (strain D39 / NCTC 7466).